A 103-amino-acid chain; its full sequence is Large ribosomal subunit protein bL21 (103 aa).

This sequence belongs to the bacterial ribosomal protein bL21 family. In terms of assembly, part of the 50S ribosomal subunit. Contacts protein L20.

This protein binds to 23S rRNA in the presence of protein L20. The protein is Large ribosomal subunit protein bL21 of Colwellia psychrerythraea (strain 34H / ATCC BAA-681) (Vibrio psychroerythus).